We begin with the raw amino-acid sequence, 364 residues long: Sulfate/thiosulfate import ATP-binding protein CysA (364 aa).

The 235-residue stretch at 3-237 (IEIARIKKSF…PATRFVLEFM (235 aa)) folds into the ABC transporter domain. 35 to 42 (GPSGSGKT) contacts ATP.

The protein belongs to the ABC transporter superfamily. Sulfate/tungstate importer (TC 3.A.1.6) family. The complex is composed of two ATP-binding proteins (CysA), two transmembrane proteins (CysT and CysW) and a solute-binding protein (CysP).

The protein localises to the cell inner membrane. The enzyme catalyses sulfate(out) + ATP + H2O = sulfate(in) + ADP + phosphate + H(+). It catalyses the reaction thiosulfate(out) + ATP + H2O = thiosulfate(in) + ADP + phosphate + H(+). Its function is as follows. Part of the ABC transporter complex CysAWTP involved in sulfate/thiosulfate import. Responsible for energy coupling to the transport system. In Salmonella typhi, this protein is Sulfate/thiosulfate import ATP-binding protein CysA.